The following is a 464-amino-acid chain: tRNA modification GTPase MnmE (464 aa).

The (6S)-5-formyl-5,6,7,8-tetrahydrofolate site is built by arginine 27, glutamate 89, and arginine 128. Positions 225–384 (GLATAIIGHP…LEDRIAAMFF (160 aa)) constitute a TrmE-type G domain. Asparagine 235 provides a ligand contact to K(+). GTP contacts are provided by residues 235-240 (NVGKSS), 254-260 (TDVAGTT), and 279-282 (DTAG). Serine 239 is a Mg(2+) binding site. K(+)-binding residues include threonine 254, valine 256, and threonine 259. Residue threonine 260 participates in Mg(2+) binding. Residue lysine 464 participates in (6S)-5-formyl-5,6,7,8-tetrahydrofolate binding.

It belongs to the TRAFAC class TrmE-Era-EngA-EngB-Septin-like GTPase superfamily. TrmE GTPase family. Homodimer. Heterotetramer of two MnmE and two MnmG subunits. K(+) serves as cofactor.

It localises to the cytoplasm. In terms of biological role, exhibits a very high intrinsic GTPase hydrolysis rate. Involved in the addition of a carboxymethylaminomethyl (cmnm) group at the wobble position (U34) of certain tRNAs, forming tRNA-cmnm(5)s(2)U34. The chain is tRNA modification GTPase MnmE from Pediococcus pentosaceus (strain ATCC 25745 / CCUG 21536 / LMG 10740 / 183-1w).